A 343-amino-acid chain; its full sequence is MWLEWLVAWSWSLDGLRDCIATGIQSVRDCDGTAVITVACLLVLFVWYCYHVGREQPRPHVSVNSLLQGVDANGLQNGSMYCQSPECVRCTHHDGLNQKLYHNLQEYAKRYSWSGMGRIHKGIREQGRYLSSQPSIQKPEVFFLPDLPTTPYFPRDAQKHDVELLERNFQAILCEFEALYKAFSNCSLPQGWKVNSTPSGEWFTFDFVSQGVCVPRNCRKCPRTYRLLGSLRTCIGNNVFGNACISVLSPGTVITEHYGPTNIRIRCHLGLKTPNGCELVVGGEPQCWAEGRCLLFDDSFLHTSFHEGSAEDGPRVVFMVDLWHPNVAAAERQALDFIFAPGR.

Residues 1–31 are Cytoplasmic-facing; that stretch reads MWLEWLVAWSWSLDGLRDCIATGIQSVRDCD. A helical membrane pass occupies residues 32-52; the sequence is GTAVITVACLLVLFVWYCYHV. At 53–343 the chain is on the lumenal side; that stretch reads GREQPRPHVS…ALDFIFAPGR (291 aa). N77 and N185 each carry an N-linked (GlcNAc...) asparagine glycan. 2 residues coordinate 2-oxoglutarate: W202 and S246. H257 is a binding site for Fe cation. 266–268 contacts 2-oxoglutarate; the sequence is RCH. H302 is a Fe cation binding site. R315 contacts 2-oxoglutarate.

The protein belongs to the aspartyl/asparaginyl beta-hydroxylase family. Fe cation serves as cofactor.

The protein localises to the membrane. In terms of biological role, may function as 2-oxoglutarate-dependent dioxygenase. The polypeptide is Aspartate beta-hydroxylase domain-containing protein 2 (Asphd2) (Rattus norvegicus (Rat)).